The chain runs to 567 residues: Major facilitator superfamily transporter MG061 (567 aa).

12 consecutive transmembrane segments (helical) span residues 15 to 35, 78 to 98, 104 to 124, 193 to 213, 230 to 250, 264 to 284, 321 to 341, 363 to 383, 405 to 425, 426 to 446, 462 to 482, and 503 to 523; these read ITLW…WFVI, WTIT…VLKF, VLIM…GDPL, GYAL…TLVV, ILSN…FTPF, VYIM…FLWF, LIGV…PAWF, TGLA…FVVF, IVVL…SAAG, FALI…LSSS, LPIL…LFDI, and PGVI…NLIV.

This sequence belongs to the major facilitator superfamily.

The protein resides in the cell membrane. This Mycoplasma genitalium (strain ATCC 33530 / DSM 19775 / NCTC 10195 / G37) (Mycoplasmoides genitalium) protein is Major facilitator superfamily transporter MG061.